We begin with the raw amino-acid sequence, 353 residues long: Photosystem II D2 protein (353 aa).

Thr-2 bears the N-acetylthreonine mark. Thr-2 carries the phosphothreonine modification. A helical transmembrane segment spans residues 41–61 (CAYFALGGWFTGTTFVTSWYT). His-118 provides a ligand contact to chlorophyll a. Residues 125–141 (GFMLRQFEIARSVNLRP) traverse the membrane as a helical segment. 2 residues coordinate pheophytin a: Gln-130 and Asn-143. Residues 153–166 (VFVSVFLIYPLGQS) form a helical membrane-spanning segment. His-198 lines the chlorophyll a pocket. The helical transmembrane segment at 208–228 (AALLCAIHGATVENTLFEDGD) threads the bilayer. A plastoquinone contacts are provided by His-215 and Phe-262. Position 215 (His-215) interacts with Fe cation. Residue His-269 coordinates Fe cation. Residues 279–295 (GLWMSAIGVVGLALNLR) traverse the membrane as a helical segment.

This sequence belongs to the reaction center PufL/M/PsbA/D family. PSII is composed of 1 copy each of membrane proteins PsbA, PsbB, PsbC, PsbD, PsbE, PsbF, PsbH, PsbI, PsbJ, PsbK, PsbL, PsbM, PsbT, PsbX, PsbY, PsbZ, Psb30/Ycf12, at least 3 peripheral proteins of the oxygen-evolving complex and a large number of cofactors. It forms dimeric complexes. The D1/D2 heterodimer binds P680, chlorophylls that are the primary electron donor of PSII, and subsequent electron acceptors. It shares a non-heme iron and each subunit binds pheophytin, quinone, additional chlorophylls, carotenoids and lipids. There is also a Cl(-1) ion associated with D1 and D2, which is required for oxygen evolution. The PSII complex binds additional chlorophylls, carotenoids and specific lipids. serves as cofactor.

Its subcellular location is the plastid. It localises to the chloroplast thylakoid membrane. The catalysed reaction is 2 a plastoquinone + 4 hnu + 2 H2O = 2 a plastoquinol + O2. Functionally, photosystem II (PSII) is a light-driven water:plastoquinone oxidoreductase that uses light energy to abstract electrons from H(2)O, generating O(2) and a proton gradient subsequently used for ATP formation. It consists of a core antenna complex that captures photons, and an electron transfer chain that converts photonic excitation into a charge separation. The D1/D2 (PsbA/PsbD) reaction center heterodimer binds P680, the primary electron donor of PSII as well as several subsequent electron acceptors. D2 is needed for assembly of a stable PSII complex. The chain is Photosystem II D2 protein from Tetradesmus obliquus (Green alga).